Here is a 228-residue protein sequence, read N- to C-terminus: Carboxy-S-adenosyl-L-methionine synthase (228 aa).

S-adenosyl-L-methionine-binding positions include Tyr30, 55 to 57, 79 to 80, and 103 to 104; these read GSS, DN, and DV.

It belongs to the class I-like SAM-binding methyltransferase superfamily. Cx-SAM synthase family.

It carries out the reaction prephenate + S-adenosyl-L-methionine = carboxy-S-adenosyl-L-methionine + 3-phenylpyruvate + H2O. Its function is as follows. Catalyzes the conversion of S-adenosyl-L-methionine (SAM) to carboxy-S-adenosyl-L-methionine (Cx-SAM). In Staphylococcus epidermidis (strain ATCC 35984 / DSM 28319 / BCRC 17069 / CCUG 31568 / BM 3577 / RP62A), this protein is Carboxy-S-adenosyl-L-methionine synthase.